Reading from the N-terminus, the 144-residue chain is Probable transcription termination protein NusA (144 aa).

The KH domain occupies 101–144; that stretch reads RTDIVVGVKPEEIGKVIGKEGKNIKLFKDAVSRYFNVNSISVKQ.

This sequence belongs to the NusA family.

The protein localises to the cytoplasm. Functionally, participates in transcription termination. The sequence is that of Probable transcription termination protein NusA from Thermoplasma acidophilum (strain ATCC 25905 / DSM 1728 / JCM 9062 / NBRC 15155 / AMRC-C165).